A 267-amino-acid polypeptide reads, in one-letter code: Putative carbamate hydrolase RutD (267 aa).

Residues 23–139 form the AB hydrolase-1 domain; the sequence is VVLLSSGLGG…IQRCFDTRIH (117 aa).

The protein belongs to the AB hydrolase superfamily. Hydrolase RutD family.

It catalyses the reaction carbamate + 2 H(+) = NH4(+) + CO2. Its function is as follows. Involved in pyrimidine catabolism. May facilitate the hydrolysis of carbamate, a reaction that can also occur spontaneously. The protein is Putative carbamate hydrolase RutD of Caulobacter segnis (strain ATCC 21756 / DSM 7131 / JCM 7823 / NBRC 15250 / LMG 17158 / TK0059) (Mycoplana segnis).